Consider the following 71-residue polypeptide: ATP synthase subunit c (71 aa).

2 helical membrane-spanning segments follow: residues 9 to 29 (MIGYGLAAIGSAIGVGLIFAA) and 49 to 69 (LLGFALAEALAILGLVFAFVI).

This sequence belongs to the ATPase C chain family. As to quaternary structure, F-type ATPases have 2 components, F(1) - the catalytic core - and F(0) - the membrane proton channel. F(1) has five subunits: alpha(3), beta(3), gamma(1), delta(1), epsilon(1). F(0) has three main subunits: a(1), b(2) and c(10-14). The alpha and beta chains form an alternating ring which encloses part of the gamma chain. F(1) is attached to F(0) by a central stalk formed by the gamma and epsilon chains, while a peripheral stalk is formed by the delta and b chains.

The protein localises to the cell membrane. Its function is as follows. F(1)F(0) ATP synthase produces ATP from ADP in the presence of a proton or sodium gradient. F-type ATPases consist of two structural domains, F(1) containing the extramembraneous catalytic core and F(0) containing the membrane proton channel, linked together by a central stalk and a peripheral stalk. During catalysis, ATP synthesis in the catalytic domain of F(1) is coupled via a rotary mechanism of the central stalk subunits to proton translocation. Key component of the F(0) channel; it plays a direct role in translocation across the membrane. A homomeric c-ring of between 10-14 subunits forms the central stalk rotor element with the F(1) delta and epsilon subunits. The protein is ATP synthase subunit c of Micrococcus luteus (strain ATCC 4698 / DSM 20030 / JCM 1464 / CCM 169 / CCUG 5858 / IAM 1056 / NBRC 3333 / NCIMB 9278 / NCTC 2665 / VKM Ac-2230) (Micrococcus lysodeikticus).